Here is a 77-residue protein sequence, read N- to C-terminus: uncharacterized protein (77 aa).

The segment covering 1–15 (MNRTSESVEPQQNEK) has biased composition (polar residues). 2 disordered regions span residues 1–20 (MNRT…AVHW) and 31–52 (TYSN…QRTF). Positions 33–44 (SNEDDEDNEEGD) are enriched in acidic residues.

This is an uncharacterized protein from Schizosaccharomyces pombe (strain 972 / ATCC 24843) (Fission yeast).